Here is a 568-residue protein sequence, read N- to C-terminus: Malate synthase, glyoxysomal (568 aa).

The segment at 1–20 is disordered; the sequence is MGSLGMYSESGLTKKGSSRG. Residue Arg183 is the Proton acceptor of the active site. The active-site Proton donor is the Asp469. A Microbody targeting signal motif is present at residues 566-568; the sequence is SKL.

Belongs to the malate synthase family.

It is found in the glyoxysome. It carries out the reaction glyoxylate + acetyl-CoA + H2O = (S)-malate + CoA + H(+). It functions in the pathway carbohydrate metabolism; glyoxylate cycle; (S)-malate from isocitrate: step 2/2. The chain is Malate synthase, glyoxysomal from Cucumis sativus (Cucumber).